Reading from the N-terminus, the 1610-residue chain is NHS-like protein 1 (1610 aa).

Serine 24 bears the Phosphoserine mark. The tract at residues serine 145–glutamate 169 is disordered. Residues serine 198 and serine 328 each carry the phosphoserine modification. The span at threonine 433–serine 448 shows a compositional bias: polar residues. Disordered stretches follow at residues threonine 433–glutamate 477 and proline 531–serine 602. Serine 568 carries the post-translational modification Phosphoserine. The span at glycine 578 to threonine 594 shows a compositional bias: polar residues. Phosphoserine is present on serine 639. Residues glutamine 649–isoleucine 667 show a composition bias toward polar residues. Disordered stretches follow at residues glutamine 649–serine 693, serine 715–serine 778, threonine 791–glutamate 981, proline 997–glutamate 1535, and glutamate 1566–serine 1610. A compositionally biased stretch (low complexity) spans serine 715 to serine 730. Polar residues-rich tracts occupy residues serine 740–valine 760, threonine 767–serine 778, and serine 851–alanine 865. The segment covering serine 895 to valine 928 has biased composition (low complexity). 2 stretches are compositionally biased toward pro residues: residues glycine 929–cysteine 946 and proline 970–glutamate 981. Positions leucine 1001 to serine 1011 are enriched in low complexity. Residues leucine 1012–aspartate 1031 show a composition bias toward pro residues. The span at proline 1041–glycine 1053 shows a compositional bias: polar residues. Phosphoserine is present on serine 1089. The span at serine 1122–aspartate 1153 shows a compositional bias: polar residues. Serine 1167 is subject to Phosphoserine. Positions proline 1180 to serine 1193 are enriched in low complexity. Serine 1233 carries the post-translational modification Phosphoserine. Composition is skewed to basic and acidic residues over residues glycine 1240 to glutamate 1249 and glycine 1373 to arginine 1383. 2 positions are modified to phosphoserine: serine 1386 and serine 1388. Residue threonine 1392 is modified to Phosphothreonine. Positions glutamine 1405–asparagine 1422 are enriched in polar residues. A compositionally biased stretch (basic and acidic residues) spans lysine 1447–proline 1460. Composition is skewed to low complexity over residues serine 1461–serine 1474 and serine 1504–serine 1516.

This sequence belongs to the NHS family. In terms of tissue distribution, widely expressed. Expressed in adult and fetal brain, fetal eyes, adult lens, kidney, liver and intestine.

The sequence is that of NHS-like protein 1 (NHSL1) from Homo sapiens (Human).